The chain runs to 138 residues: Phosphoribosyl-AMP cyclohydrolase (138 aa).

Aspartate 86 lines the Mg(2+) pocket. Cysteine 87 serves as a coordination point for Zn(2+). Mg(2+) is bound by residues aspartate 88 and aspartate 90. The Zn(2+) site is built by cysteine 104 and cysteine 111.

This sequence belongs to the PRA-CH family. In terms of assembly, homodimer. Requires Mg(2+) as cofactor. Zn(2+) serves as cofactor.

Its subcellular location is the cytoplasm. It carries out the reaction 1-(5-phospho-beta-D-ribosyl)-5'-AMP + H2O = 1-(5-phospho-beta-D-ribosyl)-5-[(5-phospho-beta-D-ribosylamino)methylideneamino]imidazole-4-carboxamide. It participates in amino-acid biosynthesis; L-histidine biosynthesis; L-histidine from 5-phospho-alpha-D-ribose 1-diphosphate: step 3/9. In terms of biological role, catalyzes the hydrolysis of the adenine ring of phosphoribosyl-AMP. In Marinobacter nauticus (strain ATCC 700491 / DSM 11845 / VT8) (Marinobacter aquaeolei), this protein is Phosphoribosyl-AMP cyclohydrolase.